Reading from the N-terminus, the 457-residue chain is Cysteine--tRNA ligase (457 aa).

A Zn(2+)-binding site is contributed by Cys28. The 'HIGH' region signature appears at 30–40; sequence PTVYDTAHIGN. Residues Cys212, His237, and Glu241 each contribute to the Zn(2+) site. A 'KMSKS' region motif is present at residues 270–274; sequence KMSKS. Lys273 contacts ATP.

It belongs to the class-I aminoacyl-tRNA synthetase family. Monomer. Requires Zn(2+) as cofactor.

The protein resides in the cytoplasm. The enzyme catalyses tRNA(Cys) + L-cysteine + ATP = L-cysteinyl-tRNA(Cys) + AMP + diphosphate. This Wolbachia sp. subsp. Drosophila simulans (strain wRi) protein is Cysteine--tRNA ligase.